The sequence spans 635 residues: 1-deoxy-D-xylulose-5-phosphate synthase (635 aa).

Residues histidine 76 and 117–119 (GHS) each bind thiamine diphosphate. Aspartate 148 provides a ligand contact to Mg(2+). Thiamine diphosphate contacts are provided by residues 149–150 (GA), asparagine 177, tyrosine 294, and glutamate 379. Asparagine 177 provides a ligand contact to Mg(2+).

It belongs to the transketolase family. DXPS subfamily. As to quaternary structure, homodimer. The cofactor is Mg(2+). Thiamine diphosphate is required as a cofactor.

The catalysed reaction is D-glyceraldehyde 3-phosphate + pyruvate + H(+) = 1-deoxy-D-xylulose 5-phosphate + CO2. It functions in the pathway metabolic intermediate biosynthesis; 1-deoxy-D-xylulose 5-phosphate biosynthesis; 1-deoxy-D-xylulose 5-phosphate from D-glyceraldehyde 3-phosphate and pyruvate: step 1/1. In terms of biological role, catalyzes the acyloin condensation reaction between C atoms 2 and 3 of pyruvate and glyceraldehyde 3-phosphate to yield 1-deoxy-D-xylulose-5-phosphate (DXP). In Neisseria meningitidis serogroup C (strain 053442), this protein is 1-deoxy-D-xylulose-5-phosphate synthase.